The following is a 488-amino-acid chain: Signal recognition particle receptor FtsY (488 aa).

Positions 14–82 are disordered; sequence DTAPEDVSKP…AVPDDAVHGG (69 aa). The segment covering 32-67 has biased composition (low complexity); sequence VGTSSTGSPVGTGAAMPAAQDAPSPAAPHAIATPDD. GTP contacts are provided by residues 287 to 294, 369 to 373, and 433 to 436; these read GVNGVGKT, DTAGR, and TKLD.

It belongs to the GTP-binding SRP family. FtsY subfamily. Part of the signal recognition particle protein translocation system, which is composed of SRP and FtsY. SRP is a ribonucleoprotein composed of Ffh and a 4.5S RNA molecule.

Its subcellular location is the cell inner membrane. It localises to the cytoplasm. It catalyses the reaction GTP + H2O = GDP + phosphate + H(+). In terms of biological role, involved in targeting and insertion of nascent membrane proteins into the cytoplasmic membrane. Acts as a receptor for the complex formed by the signal recognition particle (SRP) and the ribosome-nascent chain (RNC). Interaction with SRP-RNC leads to the transfer of the RNC complex to the Sec translocase for insertion into the membrane, the hydrolysis of GTP by both Ffh and FtsY, and the dissociation of the SRP-FtsY complex into the individual components. The polypeptide is Signal recognition particle receptor FtsY (Nitratidesulfovibrio vulgaris (strain ATCC 29579 / DSM 644 / CCUG 34227 / NCIMB 8303 / VKM B-1760 / Hildenborough) (Desulfovibrio vulgaris)).